Reading from the N-terminus, the 355-residue chain is SH3 domain-containing protein Dlish (355 aa).

3 consecutive SH3 domains span residues 57–117, 183–243, and 287–352; these read SPDS…PCNT, EPSG…PADS, and YHGT…PPAM.

In terms of assembly, interacts with dachs (via C-terminus); the interaction is direct. Interacts (via N-terminus including SH3 domain 1) with palmitoyltransferase app; this leads to palmitoylation of Dlish by app. Also interacts with dco, ft, ft-regulated E3 ubiquitin ligase Fbxl7, F-box protein slmb and SCF E3 ubiquitin-protein ligase complex component Cul1. Palmitoylated by app.

Its subcellular location is the cytoplasm. The protein localises to the cell cortex. Its function is as follows. Required for the apical cell cortex localization, total cellular level and full activity of dachs. In Drosophila melanogaster (Fruit fly), this protein is SH3 domain-containing protein Dlish.